The sequence spans 216 residues: Protein GrpE (216 aa).

Disordered stretches follow at residues methionine 1–threonine 45 and arginine 185–valine 216. A compositionally biased stretch (acidic residues) spans threonine 205–valine 216.

This sequence belongs to the GrpE family. As to quaternary structure, homodimer.

The protein resides in the cytoplasm. Participates actively in the response to hyperosmotic and heat shock by preventing the aggregation of stress-denatured proteins, in association with DnaK and GrpE. It is the nucleotide exchange factor for DnaK and may function as a thermosensor. Unfolded proteins bind initially to DnaJ; upon interaction with the DnaJ-bound protein, DnaK hydrolyzes its bound ATP, resulting in the formation of a stable complex. GrpE releases ADP from DnaK; ATP binding to DnaK triggers the release of the substrate protein, thus completing the reaction cycle. Several rounds of ATP-dependent interactions between DnaJ, DnaK and GrpE are required for fully efficient folding. This Streptomyces griseus subsp. griseus (strain JCM 4626 / CBS 651.72 / NBRC 13350 / KCC S-0626 / ISP 5235) protein is Protein GrpE.